A 427-amino-acid chain; its full sequence is ETS domain-containing protein Elk-1 (427 aa).

Positions valine 5 to valine 86 form a DNA-binding region, ETS. Disordered regions lie at residues alanine 116–arginine 146, leucine 166–proline 202, and proline 226–proline 252. Residues lysine 229, lysine 248, and lysine 253 each participate in a glycyl lysine isopeptide (Lys-Gly) (interchain with G-Cter in SUMO) cross-link. The span at serine 300–glutamine 310 shows a compositional bias: polar residues. The disordered stretch occupies residues serine 300–alanine 350. Serine 323 bears the Phosphoserine; by MAPK1 mark. Residues threonine 335, threonine 352, threonine 362, and threonine 367 each carry the phosphothreonine; by MAPK1 modification. The tract at residues glycine 348–serine 398 is sufficient for interaction with MAD2L2. The O-linked (GlcNAc) threonine glycan is linked to threonine 380. Serine 382 carries the phosphoserine; by MAPK1 and MAPK8 modification. At serine 388 the chain carries Phosphoserine; by MAPK1. At threonine 416 the chain carries Phosphothreonine; by MAPK1. Serine 421 is subject to Phosphoserine; by MAPK1.

Belongs to the ETS family. Interacts in its sumoylated form with PIAS2/PIASX which enhances its transcriptional activator activity. Interacts with MAD2L2; the interaction is direct and promotes phosphorylation by the kinases MAPK8 and/or MAPK9. Interacts with POU1F1. Sumoylation represses transcriptional activator activity as it results in recruitment of HDAC2 to target gene promoters which leads to decreased histone acetylation and reduced transactivator activity. It also regulates nuclear retention. Post-translationally, on mitogenic stimulation, phosphorylated on C-terminal serine and threonine residues by MAPK1. Ser-382 and Ser-388 are the preferred sites for MAPK1. In vitro, phosphorylation by MAPK1 potentiates ternary complex formation with the serum responses factors, SRE and SRF. Also phosphorylated on Ser-382 by MAPK8 and/or MAKP9. Phosphorylation leads to loss of sumoylation and restores transcriptional activator activity. Phosphorylated and activated by CAMK4, MAPK11, MAPK12 and MAPK14. Upon bFGF stimulus, phosphorylated by PAK1. Phosphorylated by PRP4K at Thr-416; phosphorylation activation ELK1 transcriptional activity.

The protein resides in the nucleus. Functionally, transcription factor that binds to purine-rich DNA sequences. Forms a ternary complex with SRF and the ETS and SRF motifs of the serum response element (SRE) on the promoter region of immediate early genes such as FOS and IER2. Induces target gene transcription upon JNK and MAPK-signaling pathways stimulation. The protein is ETS domain-containing protein Elk-1 of Rattus norvegicus (Rat).